Consider the following 158-residue polypeptide: SsrA-binding protein (158 aa).

It belongs to the SmpB family.

Its subcellular location is the cytoplasm. Functionally, required for rescue of stalled ribosomes mediated by trans-translation. Binds to transfer-messenger RNA (tmRNA), required for stable association of tmRNA with ribosomes. tmRNA and SmpB together mimic tRNA shape, replacing the anticodon stem-loop with SmpB. tmRNA is encoded by the ssrA gene; the 2 termini fold to resemble tRNA(Ala) and it encodes a 'tag peptide', a short internal open reading frame. During trans-translation Ala-aminoacylated tmRNA acts like a tRNA, entering the A-site of stalled ribosomes, displacing the stalled mRNA. The ribosome then switches to translate the ORF on the tmRNA; the nascent peptide is terminated with the 'tag peptide' encoded by the tmRNA and targeted for degradation. The ribosome is freed to recommence translation, which seems to be the essential function of trans-translation. This Bartonella tribocorum (strain CIP 105476 / IBS 506) protein is SsrA-binding protein.